The chain runs to 191 residues: Large ribosomal subunit protein eL6 (191 aa).

Belongs to the eukaryotic ribosomal protein eL6 family.

The protein is Large ribosomal subunit protein eL6 (RPL6) of Tetrahymena thermophila (strain SB210).